Reading from the N-terminus, the 768-residue chain is MDRGQVLEQLLPELTGLLSLLDHEYLSDTTLEKKMAVASILQSLQPLPAKEVSYLYVNTADLHSGPSFVESLFEEFDCDLSDLRDMPEDDGEPSKGASPELAKSPRLRNAADLPPPLPNKPPPEDYYEEALPLGPGKSPEYISSHNGCSPSHSIVDGYYEDADSSYPATRVNGELKSSYNDSDAMSSSYESYDEEEEEGKSPQPRHQWPSEEASMHLVRECRICAFLLRKKRFGQWAKQLTVIREDQLLCYKSSKDRQPHLRLALDTCSIIYVPKDSRHKRHELRFTQGATEVLVLALQSREQAEEWLKVIREVSKPVGGAEGVEVPRSPVLLCKLDLDKRLSQEKQTSDSDSVGVGDNCSTLGRRETCDHGKGKKSSLAELKGSMSRAAGRKITRIIGFSKKKTLADDLQTSSTEEEVPCCGYLNVLVNQGWKERWCRLKCNTLYFHKDHMDLRTHVNAIALQGCEVAPGFGPRHPFAFRILRNRQEVAILEASCSEDMGRWLGLLLVEMGSRVTPEALHYDYVDVETLTSIVSAGRNSFLYARSCQNQWPEPRVYDDVPYEKMQDEEPERPTGAQVKRHASSCSEKSHRVDPQVKVKRHASSANQYKYGKNRAEEDARRYLVEKEKLEKEKETIRTELIALRQEKRELKEAIRSSPGAKLKALEEAVATLEAQCRAKEERRIDLELKLVAVKERLQQSLAGGPALGLSVSSKPKSGETANKPQNSVPEQPLPVNCVSELRKRSPSIVASNQGRVLQKAKEWEMKKT.

The segment at 82 to 145 (DLRDMPEDDG…GKSPEYISSH (64 aa)) is disordered. Residues serine 94, serine 98, serine 104, and serine 153 each carry the phosphoserine modification. Residues 173 to 211 (GELKSSYNDSDAMSSSYESYDEEEEEGKSPQPRHQWPSE) are disordered. Over residues 177-190 (SSYNDSDAMSSSYE) the composition is skewed to low complexity. The PH 1 domain maps to 220–316 (ECRICAFLLR…WLKVIREVSK (97 aa)). Phosphoserine is present on residues serine 329 and serine 343. One can recognise a PH 2 domain in the interval 418–512 (EVPCCGYLNV…WLGLLLVEMG (95 aa)). Tyrosine 557 carries the post-translational modification Phosphotyrosine. The disordered stretch occupies residues 566 to 604 (QDEEPERPTGAQVKRHASSCSEKSHRVDPQVKVKRHASS). Positions 587-596 (EKSHRVDPQV) are enriched in basic and acidic residues. A coiled-coil region spans residues 611–700 (GKNRAEEDAR…VAVKERLQQS (90 aa)). The tract at residues 705 to 768 (PALGLSVSSK…KAKEWEMKKT (64 aa)) is disordered. The segment covering 710–729 (SVSSKPKSGETANKPQNSVP) has biased composition (polar residues). Residue serine 747 is modified to Phosphoserine. A compositionally biased stretch (basic and acidic residues) spans 759–768 (KAKEWEMKKT).

As to quaternary structure, interacts with CTTN. As to expression, expressed in breast, colon and brain. In all 3 tissues, expressed in the microvasculature (at protein level). In addition, in the breast, found in the contractile myoepithelial cell layer which surrounds the breast ducts (at protein level). In the colon, expressed in the mucous membrane and colonic crypts and in the smooth muscle cell layer which provide movement of the colon (at protein level). In the cerebellum, localized around the Purkinje neurons and the granule cells of the granular layer, but not inside cell bodies (at protein level). Outside of the cerebellar cortex, expressed in glial cells (at protein level). Highly expressed away from the cell bodies within the dentate nucleus (at protein level).

The protein localises to the cytoplasm. Its subcellular location is the cell projection. It is found in the podosome. The protein resides in the invadopodium. It localises to the cytoskeleton. The protein localises to the stress fiber. May be involved in podosome and invadosome formation. This chain is Actin filament-associated protein 1-like 1 (AFAP1L1), found in Homo sapiens (Human).